The following is a 178-amino-acid chain: Large ribosomal subunit protein uL6 (178 aa).

This sequence belongs to the universal ribosomal protein uL6 family. In terms of assembly, part of the 50S ribosomal subunit.

Its function is as follows. This protein binds to the 23S rRNA, and is important in its secondary structure. It is located near the subunit interface in the base of the L7/L12 stalk, and near the tRNA binding site of the peptidyltransferase center. This chain is Large ribosomal subunit protein uL6, found in Arthrobacter sp. (strain FB24).